We begin with the raw amino-acid sequence, 150 residues long: Large ribosomal subunit protein uL22c (150 aa).

The protein belongs to the universal ribosomal protein uL22 family. As to quaternary structure, part of the 50S ribosomal subunit.

The protein resides in the plastid. The protein localises to the chloroplast. This protein binds specifically to 23S rRNA. In terms of biological role, the globular domain of the protein is located near the polypeptide exit tunnel on the outside of the subunit, while an extended beta-hairpin is found that lines the wall of the exit tunnel in the center of the 70S ribosome. This Fagopyrum esculentum subsp. ancestrale (Wild buckwheat) protein is Large ribosomal subunit protein uL22c (rpl22).